We begin with the raw amino-acid sequence, 360 residues long: MSRVYNFSAGPAAIPEEVLFTVRDELLDWHGIGMSIAEVSHRGEEFIGVAEEAERDLRELLAVPESYHILFLQGGSRLQFAMVPMNLLANHKKAVYIDSGVWSNLAIREAKNYCDPHLATNAKELNYTGIPDQATWDMPNEAAYFYYVDNETVNGIEFPFIPDTDLTLVCDMSSNLLSRPFDVSRYGLIFACAQKNMGLAGLTIVIVHDDLLKRSPLPTTPSYLQYALHAKERSFINTPPTFAWYLAGLIFKWVKNQGGVAVLAERNQRKAAKLYKFIDKSNFFDNPINPTYRSRMNVIFRLADERLNSLFLKEATENGLANLKGHRLLGGMRASIYNAMTEEGVDALINFMGQFEKRHG.

Arginine 42 lines the L-glutamate pocket. Positions 102, 152, 171, and 194 each coordinate pyridoxal 5'-phosphate. Lysine 195 is modified (N6-(pyridoxal phosphate)lysine). Residue 237-238 coordinates pyridoxal 5'-phosphate; it reads NT.

Belongs to the class-V pyridoxal-phosphate-dependent aminotransferase family. SerC subfamily. As to quaternary structure, homodimer. Pyridoxal 5'-phosphate is required as a cofactor.

It is found in the cytoplasm. It catalyses the reaction O-phospho-L-serine + 2-oxoglutarate = 3-phosphooxypyruvate + L-glutamate. It carries out the reaction 4-(phosphooxy)-L-threonine + 2-oxoglutarate = (R)-3-hydroxy-2-oxo-4-phosphooxybutanoate + L-glutamate. Its pathway is amino-acid biosynthesis; L-serine biosynthesis; L-serine from 3-phospho-D-glycerate: step 2/3. The protein operates within cofactor biosynthesis; pyridoxine 5'-phosphate biosynthesis; pyridoxine 5'-phosphate from D-erythrose 4-phosphate: step 3/5. Its function is as follows. Catalyzes the reversible conversion of 3-phosphohydroxypyruvate to phosphoserine and of 3-hydroxy-2-oxo-4-phosphonooxybutanoate to phosphohydroxythreonine. The sequence is that of Phosphoserine aminotransferase from Coxiella burnetii (strain CbuG_Q212) (Coxiella burnetii (strain Q212)).